We begin with the raw amino-acid sequence, 482 residues long: Protein trichome birefringence-like 15 (482 aa).

A helical; Signal-anchor for type II membrane protein transmembrane segment spans residues 109-129; that stretch reads GSVSLSLIILILLVTTLLVSA. The GDS motif motif lies at 217 to 219; the sequence is GDS. The DCXHWCLPGXXDXWN motif motif lies at 461 to 475; it reads DCLHWCLPGIPDTWN.

Belongs to the PC-esterase family. TBL subfamily.

The protein resides in the membrane. Its function is as follows. May act as a bridging protein that binds pectin and other cell wall polysaccharides. Probably involved in maintaining esterification of pectins. May be involved in the specific O-acetylation of cell wall polymers. The polypeptide is Protein trichome birefringence-like 15 (TBL15) (Arabidopsis thaliana (Mouse-ear cress)).